Consider the following 1235-residue polypeptide: STE20-like serine/threonine-protein kinase (1235 aa).

Serine 14 is subject to Phosphoserine. The 259-residue stretch at 34–292 folds into the Protein kinase domain; sequence WEIIGELGDG…TSQLLQHPFV (259 aa). ATP contacts are provided by residues 40 to 48 and lysine 63; that span reads LGDGAFGKV. Aspartate 155 serves as the catalytic Proton acceptor. Phosphothreonine is present on threonine 183. Position 189 is a phosphoserine (serine 189). The tract at residues 309–351 is disordered; the sequence is AEVTEEVEDGKEEDEEEETENSLPIPASKRASSDLSIASSEED. A compositionally biased stretch (acidic residues) spans 312–328; the sequence is TEEVEDGKEEDEEEETE. A phosphoserine mark is found at serine 330, serine 340, serine 341, serine 344, serine 347, serine 348, serine 354, and serine 372. Disordered stretches follow at residues 363-393 and 421-441; these read VSEKTERSNSEDKLNSKILNEKPTTDEPEKA and ENEREKRPKLENLPDTEDQET. Residues 421-432 are compositionally biased toward basic and acidic residues; that stretch reads ENEREKRPKLEN. Residue serine 518 is modified to Phosphoserine. The disordered stretch occupies residues 519–539; the sequence is EVGLTKEDTQEKLGEDDKTQK. Over residues 522–539 the composition is skewed to basic and acidic residues; the sequence is LTKEDTQEKLGEDDKTQK. Serine 565 bears the Phosphoserine mark. Position 569 is a phosphothreonine (threonine 569). Serine 571, serine 647, serine 655, and serine 667 each carry phosphoserine. Residues 613-760 are disordered; sequence EGKNKEQAIN…GTGSTADTSS (148 aa). Positions 638-650 are enriched in acidic residues; sequence EGEEITESSSTEE. The span at 679-695 shows a compositional bias: basic and acidic residues; the sequence is IDKEKKEIPVSIKKEPE. Over residues 749–760 the composition is skewed to low complexity; the sequence is DSGTGSTADTSS. Serine 777 and serine 779 each carry phosphoserine. Threonine 814 carries the post-translational modification Phosphothreonine. Serine 818 is modified (phosphoserine). The stretch at 826–1069 forms a coiled coil; the sequence is LRRQELRELR…LKNRQTQERA (244 aa). The region spanning 875-910 is the UVR domain; the sequence is DQEIENLEKQQKQTIERLEQEHTNRLRDEAKRIKGE. Threonine 1097 carries the post-translational modification Phosphothreonine. Positions 1109–1183 form a coiled coil; sequence AAQEEKRQKN…ELKEWREKLR (75 aa).

It belongs to the protein kinase superfamily. STE Ser/Thr protein kinase family. STE20 subfamily. Post-translationally, proteolytically cleaved by caspase-3. Autophosphorylated. As to expression, ubiquitously expressed. Highest expression is found in heart and in skeletal muscle.

The protein resides in the cytoplasm. The catalysed reaction is L-seryl-[protein] + ATP = O-phospho-L-seryl-[protein] + ADP + H(+). It catalyses the reaction L-threonyl-[protein] + ATP = O-phospho-L-threonyl-[protein] + ADP + H(+). Its function is as follows. Mediates apoptosis and actin stress fiber dissolution. This chain is STE20-like serine/threonine-protein kinase (SLK), found in Homo sapiens (Human).